The sequence spans 638 residues: Sodium- and chloride-dependent glycine transporter 1 (638 aa).

The disordered stretch occupies residues 1–29; sequence MAAAQGPVAPSSLEQNGAVPSEATKKDQN. Over 1–40 the chain is Cytoplasmic; it reads MAAAQGPVAPSSLEQNGAVPSEATKKDQNLKRGNWGNQIE. 3 helical membrane passes run 41 to 61, 69 to 88, and 112 to 132; these read FVLTSVGYAVGLGNVWRFPYL, AFMFPYFIMLIFCGIPLFFM, and GVGYGMMVVSTYIGIYYNVVI. The Extracellular portion of the chain corresponds to 133 to 219; it reads CIAFYYFFSS…DDIGNFGEVR (87 aa). Residues N169, N172, N182, and N188 are each glycosylated (N-linked (GlcNAc...) asparagine). 9 helical membrane passes run 220-238, 247-264, 300-317, 329-350, 383-402, 431-449, 465-485, 506-525, and 544-562; these read LPLLGCLGVSWVVVFLCLI, VVYFTATFPYVVLTILFI, IFYSLGCAWGGLVTMASY, VIISITNCATSVYAGFVIFSIL, LPISPLWSLLFFFMLILLGL, YVTLGVAVAGFLLGIPLTS, SFSLVIISCIMCVSIMYIYGH, ICWRFVSPAIIFFILIFSVI, and IGFLMALSSVICIPLYALF. Residues 563–638 are Cytoplasmic-facing; that stretch reads QFCRTDGDTL…GSSRFQDSRI (76 aa). Residues 597–638 form a disordered region; the sequence is RYAPTTTPSPEDGLEVQPLHPDKAQIPMVGSNGSSRFQDSRI. A Phosphothreonine modification is found at T603. Residues S605 and S630 each carry the phosphoserine modification. Residues 627–638 are essential for interaction with EXOC1; that stretch reads SNGSSRFQDSRI. A compositionally biased stretch (polar residues) spans 627–638; it reads SNGSSRFQDSRI.

Belongs to the sodium:neurotransmitter symporter (SNF) (TC 2.A.22) family. SLC6A9 subfamily. In terms of assembly, interacts with EXOC1; interaction increases the transporter capacity of SLC6A9 probably by promoting its insertion into the cell membrane. Interacts with EXOC3 and EXOC4.

Its subcellular location is the cell membrane. It carries out the reaction glycine(out) + chloride(out) + 2 Na(+)(out) = glycine(in) + chloride(in) + 2 Na(+)(in). Functionally, sodium- and chloride-dependent glycine transporter which is essential for regulating glycine concentrations at inhibitory glycinergic synapses. The chain is Sodium- and chloride-dependent glycine transporter 1 (SLC6A9) from Bos taurus (Bovine).